Here is a 50-residue protein sequence, read N- to C-terminus: HLRNHFGSKPFKCGKCNYSCANKSMLNSHMKSHSNIYQYRCANCCYATKY.

C2H2-type zinc fingers lie at residues 1–5, 11–33, and 39–50; these read HLRNH, FKCG…MKSH, and YRCANCCYATKY.

It belongs to the hunchback C2H2-type zinc-finger protein family.

It is found in the nucleus. Its function is as follows. Gap class segmentation protein that controls development of head structures. This chain is Protein hunchback (hb), found in Pholcus phalangioides (Longbodied cellar spider).